We begin with the raw amino-acid sequence, 438 residues long: Aflatoxin cluster transcriptional coactivator aflS (438 aa).

Positions 65 to 134 (LALYNQLLAC…PSPGHVAHSV (70 aa)) constitute an HTH iclR-type domain. Positions 95–114 (FEDVADIAGVPECRLRRLVR) form a DNA-binding region, H-T-H motif.

In terms of assembly, interacts with aflR.

The protein localises to the nucleus. Functionally, transcription factor; part of the gene cluster that mediates the biosynthesis of aflatoxin, a polyketide-derived furanocoumarin which is part of the most toxic and carcinogenic compounds among the known mycotoxins. AflS exhibits no DNA-binding capability on its own, but forms a complex with the other aflatoxin cluster transcription factor aflR and acts as a modulator of aflR's DNA-binding by decreasing its DNA-binding affinity. The sequence is that of Aflatoxin cluster transcriptional coactivator aflS from Aspergillus flavus (strain ATCC 200026 / FGSC A1120 / IAM 13836 / NRRL 3357 / JCM 12722 / SRRC 167).